Here is a 236-residue protein sequence, read N- to C-terminus: 2-C-methyl-D-erythritol 4-phosphate cytidylyltransferase (236 aa).

Belongs to the IspD/TarI cytidylyltransferase family. IspD subfamily. In terms of assembly, homodimer.

The catalysed reaction is 2-C-methyl-D-erythritol 4-phosphate + CTP + H(+) = 4-CDP-2-C-methyl-D-erythritol + diphosphate. Its pathway is isoprenoid biosynthesis; isopentenyl diphosphate biosynthesis via DXP pathway; isopentenyl diphosphate from 1-deoxy-D-xylulose 5-phosphate: step 2/6. Functionally, catalyzes the formation of 4-diphosphocytidyl-2-C-methyl-D-erythritol from CTP and 2-C-methyl-D-erythritol 4-phosphate (MEP). The sequence is that of 2-C-methyl-D-erythritol 4-phosphate cytidylyltransferase from Salmonella paratyphi B (strain ATCC BAA-1250 / SPB7).